The sequence spans 143 residues: MDQTLSGFGNVFVFLALGIVFVAGGYLTARMLRPSRPNPEKNSTYECGEEAVGSAWVKFNIRFYVVALIFIIFDVEVVFLYPWATVFKQLGEFALFEALVFAGILILGLAYAWVKGDLDWVRPTPNIPKMPELPAGKPDGSRG.

The next 3 membrane-spanning stretches (helical) occupy residues 7–27 (GFGN…GGYL), 63–83 (FYVV…LYPW), and 93–113 (FALF…AYAW).

This sequence belongs to the complex I subunit 3 family. NDH-1 is composed of 14 different subunits. Subunits NuoA, H, J, K, L, M, N constitute the membrane sector of the complex.

It localises to the cell inner membrane. It carries out the reaction a quinone + NADH + 5 H(+)(in) = a quinol + NAD(+) + 4 H(+)(out). NDH-1 shuttles electrons from NADH, via FMN and iron-sulfur (Fe-S) centers, to quinones in the respiratory chain. The immediate electron acceptor for the enzyme in this species is believed to be a menaquinone. Couples the redox reaction to proton translocation (for every two electrons transferred, four hydrogen ions are translocated across the cytoplasmic membrane), and thus conserves the redox energy in a proton gradient. The protein is NADH-quinone oxidoreductase subunit A of Chlorobium limicola (strain DSM 245 / NBRC 103803 / 6330).